Here is a 150-residue protein sequence, read N- to C-terminus: Mating pheromone 1 (150 aa).

The first 16 residues, 1–16 (MKAIFIILAILMVTQA), serve as a signal peptide directing secretion. Positions 17 to 52 (FKMTSKVNTKLQSQIQSKFQSKNKLASTFQTSSKLK) are excised as a propeptide.

Its subcellular location is the secreted. Its function is as follows. Mating ciliate pheromones (or gamones) are diffusible extracellular communication signals that distinguish different intraspecific classes of cells commonly referred to as 'mating types'. They prepare the latter for conjugation by changing their cell surface properties. The chain is Mating pheromone 1 from Euplotoides octocarinatus (Freshwater ciliate).